The following is a 709-amino-acid chain: Elongation factor G (709 aa).

One can recognise a tr-type G domain in the interval N10–E295. Residues A19–T26, D91–H95, and N145–D148 each bind GTP.

The protein belongs to the TRAFAC class translation factor GTPase superfamily. Classic translation factor GTPase family. EF-G/EF-2 subfamily.

The protein localises to the cytoplasm. Catalyzes the GTP-dependent ribosomal translocation step during translation elongation. During this step, the ribosome changes from the pre-translocational (PRE) to the post-translocational (POST) state as the newly formed A-site-bound peptidyl-tRNA and P-site-bound deacylated tRNA move to the P and E sites, respectively. Catalyzes the coordinated movement of the two tRNA molecules, the mRNA and conformational changes in the ribosome. The polypeptide is Elongation factor G (Bifidobacterium adolescentis (strain ATCC 15703 / DSM 20083 / NCTC 11814 / E194a)).